The following is a 391-amino-acid chain: O-methyltransferase ATR12 (391 aa).

S-adenosyl-L-methionine is bound by residues 233 to 234 (GG), Asp259, and 279 to 280 (DF). Catalysis depends on His299, which acts as the Proton acceptor.

It belongs to the class I-like SAM-binding methyltransferase superfamily. Cation-independent O-methyltransferase family. COMT subfamily.

The protein operates within mycotoxin biosynthesis. O-methyltransferase; part of the core atranone cluster (CAC) which products are predicted to catalyze most or all steps of mycotoxin atranone synthesis, starting from geranylgeranyl pyrophosphate (GGPP). The initial cyclization of GGPP to dolabellane is probably performed by the terpene cyclase ATR13. The Baeyer-Villiger oxidation near the end of the atranone synthesis, which converts atranones D and E to atranones F and G is predicted to be catalyzed by the monooxygenase ATR8. Of the CAC's other predicted gene products, the reducing PKS ATR6 might synthesize a polyketide chain. This polyketide is probably transferred onto the atranone backbone by the polyketide transferase ATR5. Other predicted CAC products include 4 oxygenases (ATR2, ATR3, ATR4, and ATR14), 3 short-chain reductases (ATR7, ATR9, and ATR10), and a methyltransferase (ATR12). These may all be involved in the various steps of atranone biosynthesis, although their specific roles must await experimental determination. The sequence is that of O-methyltransferase ATR12 from Stachybotrys chlorohalonatus (strain IBT 40285).